A 288-amino-acid polypeptide reads, in one-letter code: NAD kinase (288 aa).

The Proton acceptor role is filled by D70. NAD(+) contacts are provided by residues D70 to G71, N144 to D145, R155, K172, D174, T185 to S190, and Q245.

The protein belongs to the NAD kinase family. A divalent metal cation is required as a cofactor.

It localises to the cytoplasm. It carries out the reaction NAD(+) + ATP = ADP + NADP(+) + H(+). Its function is as follows. Involved in the regulation of the intracellular balance of NAD and NADP, and is a key enzyme in the biosynthesis of NADP. Catalyzes specifically the phosphorylation on 2'-hydroxyl of the adenosine moiety of NAD to yield NADP. The protein is NAD kinase of Citrifermentans bemidjiense (strain ATCC BAA-1014 / DSM 16622 / JCM 12645 / Bem) (Geobacter bemidjiensis).